The primary structure comprises 242 residues: MGHKINPTGLRLGITQEHRSRWYASSKSYPALLQEDDRIRKFIHKKYGSAGISDVLIARKADQLEVELKTARPGVLVGRQGSGIEELRSGIQKTVGDRSRQVRINVVEVERVDGDAFLLAEYIAQQLEKRVAFRRTIRMAVQRAQRAGVLGLKIQVSGRLNGAEIARTEWTREGRVPLHTLRADIDYATKVASTTYGVLGIKVWVFKGEVLGDEAPLIPVGASPRRRASRRPQQFEDRSNEG.

Residues 39 to 110 (IRKFIHKKYG…QVRINVVEVE (72 aa)) enclose the KH type-2 domain. The disordered stretch occupies residues 221–242 (GASPRRRASRRPQQFEDRSNEG). Basic and acidic residues predominate over residues 233–242 (QQFEDRSNEG).

The protein belongs to the universal ribosomal protein uS3 family. Part of the 30S ribosomal subunit. Forms a tight complex with proteins S10 and S14.

Its function is as follows. Binds the lower part of the 30S subunit head. Binds mRNA in the 70S ribosome, positioning it for translation. The polypeptide is Small ribosomal subunit protein uS3 (Parasynechococcus marenigrum (strain WH8102)).